The primary structure comprises 1321 residues: Multidrug resistance protein pgp-1 (1321 aa).

At 1–77 (MLRNGSLRQS…YTTTLEKLLL (77 aa)) the chain is on the cytoplasmic side. Residues 77–381 (LFIGTLVAVI…AGPQLAVLGT (305 aa)) enclose the ABC transmembrane type-1 1 domain. Residues 78–98 (FIGTLVAVITGAGLPLMSILQ) form a helical membrane-spanning segment. N115 and N125 each carry an N-linked (GlcNAc...) asparagine glycan. A helical transmembrane segment spans residues 144–164 (AMTVGMWAAGQITVTCYLYVA). N190 carries an N-linked (GlcNAc...) asparagine glycan. 4 helical membrane passes run 213–233 (KIGM…VAFT), 240–260 (LVML…AKSM), 321–341 (ISFG…FYIG), and 350–370 (LNFG…MALG). The Cytoplasmic portion of the chain corresponds to 371-753 (LAGPQLAVLG…LYHARPHALS (383 aa)). Positions 416-652 (ITVENVHFTY…QGLYYDLVTA (237 aa)) constitute an ABC transporter 1 domain. An ATP-binding site is contributed by 451 to 458 (GSSGCGKS). The next 2 membrane-spanning stretches (helical) occupy residues 754–774 (LFIG…YSVF) and 798–818 (LMFL…TFFM). The 290-residue stretch at 754 to 1043 (LFIGMSTATI…ATSYFPEYAK (290 aa)) folds into the ABC transmembrane type-1 2 domain. A glycan (N-linked (GlcNAc...) asparagine) is linked at N850. 4 consecutive transmembrane segments (helical) span residues 874-894 (FSTV…AFFY), 895-915 (GWQM…GQYL), 978-998 (IQGL…TCAY), and 1017-1037 (VLRV…ATSY). Topologically, residues 1038 to 1321 (FPEYAKATFA…LTQKQMTEKK (284 aa)) are cytoplasmic. Residues 1077–1315 (VIFKNVRFAY…KGAYYKLTQK (239 aa)) enclose the ABC transporter 2 domain. 1112 to 1119 (GPSGCGKS) is an ATP binding site.

The protein belongs to the ABC transporter superfamily. ABCB family. Multidrug resistance exporter (TC 3.A.1.201) subfamily. As to expression, intestinal cells.

The protein localises to the membrane. The catalysed reaction is ATP + H2O + xenobioticSide 1 = ADP + phosphate + xenobioticSide 2.. In terms of biological role, energy-dependent efflux pump responsible for decreased drug accumulation in multidrug-resistant cells. This Caenorhabditis elegans protein is Multidrug resistance protein pgp-1 (pgp-1).